We begin with the raw amino-acid sequence, 375 residues long: Protein abhd-3.2 (375 aa).

One can recognise an AB hydrolase-1 domain in the interval 108–203 (PIVVFLPGIT…ILWNYLAMTG (96 aa)). Residues Ser-189, Asp-315, and His-344 each act as charge relay system in the active site.

Belongs to the AB hydrolase superfamily. AB hydrolase 4 family.

The protein is Protein abhd-3.2 of Caenorhabditis elegans.